The primary structure comprises 239 residues: Serine protease SplF (239 aa).

The signal sequence occupies residues 1 to 36 (MNKNIIIKSIAALTILTSITGVGTTMVEGIQQTAKA). Active-site charge relay system residues include histidine 75, aspartate 114, and serine 192.

Belongs to the peptidase S1B family.

It localises to the secreted. The protein is Serine protease SplF (splF) of Staphylococcus aureus (strain NCTC 8325 / PS 47).